The primary structure comprises 188 residues: UPF0397 protein LACR_0367 (188 aa).

5 helical membrane passes run 14–34 (IVVA…LINI), 48–68 (AVLA…IGFI), 80–100 (APWW…GFGV), 120–140 (IVQF…GDIL), and 152–172 (QGVV…TLLL).

Belongs to the UPF0397 family.

It localises to the cell membrane. The protein is UPF0397 protein LACR_0367 of Lactococcus lactis subsp. cremoris (strain SK11).